The sequence spans 157 residues: 2-C-methyl-D-erythritol 2,4-cyclodiphosphate synthase (157 aa).

Aspartate 8 and histidine 10 together coordinate a divalent metal cation. 4-CDP-2-C-methyl-D-erythritol 2-phosphate contacts are provided by residues 8-10 (DVH) and 34-35 (HS). Histidine 42 lines the a divalent metal cation pocket. Residues 56 to 58 (DIG), 61 to 65 (FPDTD), 100 to 106 (AQAPKMA), 132 to 135 (TTTE), phenylalanine 139, and arginine 142 each bind 4-CDP-2-C-methyl-D-erythritol 2-phosphate.

Belongs to the IspF family. Homotrimer. Requires a divalent metal cation as cofactor.

It catalyses the reaction 4-CDP-2-C-methyl-D-erythritol 2-phosphate = 2-C-methyl-D-erythritol 2,4-cyclic diphosphate + CMP. The protein operates within isoprenoid biosynthesis; isopentenyl diphosphate biosynthesis via DXP pathway; isopentenyl diphosphate from 1-deoxy-D-xylulose 5-phosphate: step 4/6. Its function is as follows. Involved in the biosynthesis of isopentenyl diphosphate (IPP) and dimethylallyl diphosphate (DMAPP), two major building blocks of isoprenoid compounds. Catalyzes the conversion of 4-diphosphocytidyl-2-C-methyl-D-erythritol 2-phosphate (CDP-ME2P) to 2-C-methyl-D-erythritol 2,4-cyclodiphosphate (ME-CPP) with a corresponding release of cytidine 5-monophosphate (CMP). The sequence is that of 2-C-methyl-D-erythritol 2,4-cyclodiphosphate synthase from Pseudomonas aeruginosa (strain UCBPP-PA14).